The sequence spans 156 residues: Ribosomal RNA large subunit methyltransferase H (156 aa).

S-adenosyl-L-methionine-binding positions include L73, G104, and 123–128 (IGPLTL).

This sequence belongs to the RNA methyltransferase RlmH family. Homodimer.

Its subcellular location is the cytoplasm. The enzyme catalyses pseudouridine(1915) in 23S rRNA + S-adenosyl-L-methionine = N(3)-methylpseudouridine(1915) in 23S rRNA + S-adenosyl-L-homocysteine + H(+). Its function is as follows. Specifically methylates the pseudouridine at position 1915 (m3Psi1915) in 23S rRNA. The protein is Ribosomal RNA large subunit methyltransferase H of Xanthomonas oryzae pv. oryzae (strain MAFF 311018).